Reading from the N-terminus, the 1007-residue chain is Calmodulin-binding transcription activator 1 (1007 aa).

A DNA-binding region (CG-1) is located at residues 18 to 144 (MEQLLSEAQH…YLEVKGNRTS (127 aa)). Polar residues predominate over residues 148-164 (KENNSNSVNGTASVNID). The tract at residues 148–227 (KENNSNSVNG…VHGNRVRESD (80 aa)) is disordered. Residues 165 to 176 (STASPTSTLSSL) show a composition bias toward low complexity. The segment covering 183–202 (GDSQQASSVLRPSPEPQTGN) has biased composition (polar residues). The segment at 233–398 (DVRALDTVGN…TVECETAAAG (166 aa)) is transcription activation. 2 ANK repeats span residues 612 to 641 (DGQGILHFVAALGYDWAIKPVLAAGVNINF) and 645 to 674 (NGWSALHWAAFSGREETVAVLVSLGADAGA). 2 IQ domains span residues 821 to 850 (LSCAATHIQKKYRGWKKRKEFLLIRQRIVK) and 844 to 873 (IRQRIVKIQAHVRGHQVRKQYRTVIWSVGL). Residues 869–891 (WSVGLLEKIILRWRRKGNGLRGF) form a calmodulin-binding region. Positions 915 to 943 (QEDEYDYLKEGRKQTEERLQKALTRVKSM) form a coiled coil. Ser942 carries the post-translational modification Phosphoserine.

The protein belongs to the CAMTA family. As to expression, expressed in roots, stems, leaves, pollen and siliques.

Its subcellular location is the nucleus. Functionally, transcription activator that binds calmodulin in a calcium-dependent manner in vitro. Binds to the DNA consensus sequence 5'-[ACG]CGCG[GTC]-3'. Regulates transcriptional activity in response to calcium signals. Involved in freezing tolerance. Involved in freezing tolerance in association with CAMTA2 and CAMTA3. Contributes together with CAMTA2 and CAMTA3 to the positive regulation of the cold-induced expression of DREB1A/CBF3, DREB1B/CBF1 and DREB1C/CBF2. Involved in drought stress responses by regulating several drought-responsive genes. Involved in auxin signaling and responses to abiotic stresses. Activates the expression of the V-PPase proton pump AVP1 in pollen. This chain is Calmodulin-binding transcription activator 1, found in Arabidopsis thaliana (Mouse-ear cress).